We begin with the raw amino-acid sequence, 437 residues long: MTNATSAPPARADRAPASKALFDRAAAVLPGGVNSPVRAFRAVGGDPLFIARAQGARLFDADGAEYIDYVGSWGPAILGHAHPAVIEAVREAALGGLSFGAPTELEVRFAEKIRELYPSIDMLRCVSSGTEATMSAIRVARGFTRRDAIIKFEGCYHGHADHLLVKAGSGLATFGAPDSAGVPESIARTTLSLPYNDPAALEAAFAARGGDIAAVILEPVVGNMGCVPPEPGFLALVIDLCRKHGALSIFDEVMTGCRLARGGAQERFGLRPDLTTLGKIVGGGMPLAAYGGRADVMRVVSPLGPVYQAGTLSGNPLAVTAGLATLDRLTPALYERLEELGASLEEGLRAAAEGAGAAACVQRVGSMITLFFTKGPVRSWADAATSDTKRFSAFHAAMLARGIYWPPSQYEAAFLSGAHSEEDIERTIAACREALAA.

N6-(pyridoxal phosphate)lysine is present on lysine 279.

The protein belongs to the class-III pyridoxal-phosphate-dependent aminotransferase family. HemL subfamily. As to quaternary structure, homodimer. Requires pyridoxal 5'-phosphate as cofactor.

The protein resides in the cytoplasm. It catalyses the reaction (S)-4-amino-5-oxopentanoate = 5-aminolevulinate. It functions in the pathway porphyrin-containing compound metabolism; protoporphyrin-IX biosynthesis; 5-aminolevulinate from L-glutamyl-tRNA(Glu): step 2/2. This Sorangium cellulosum (strain So ce56) (Polyangium cellulosum (strain So ce56)) protein is Glutamate-1-semialdehyde 2,1-aminomutase.